The sequence spans 66 residues: Large ribosomal subunit protein bL35 (66 aa).

It belongs to the bacterial ribosomal protein bL35 family.

This chain is Large ribosomal subunit protein bL35, found in Ruegeria sp. (strain TM1040) (Silicibacter sp.).